The sequence spans 143 residues: Flagellar assembly factor FliW (143 aa).

It belongs to the FliW family. Interacts with translational regulator CsrA and flagellin(s).

The protein localises to the cytoplasm. Functionally, acts as an anti-CsrA protein, binds CsrA and prevents it from repressing translation of its target genes, one of which is flagellin. Binds to flagellin and participates in the assembly of the flagellum. The polypeptide is Flagellar assembly factor FliW (Clostridium botulinum (strain Okra / Type B1)).